The chain runs to 187 residues: Elongation factor P (187 aa).

Belongs to the elongation factor P family.

Its subcellular location is the cytoplasm. The protein operates within protein biosynthesis; polypeptide chain elongation. In terms of biological role, involved in peptide bond synthesis. Stimulates efficient translation and peptide-bond synthesis on native or reconstituted 70S ribosomes in vitro. Probably functions indirectly by altering the affinity of the ribosome for aminoacyl-tRNA, thus increasing their reactivity as acceptors for peptidyl transferase. The chain is Elongation factor P from Syntrophus aciditrophicus (strain SB).